A 461-amino-acid polypeptide reads, in one-letter code: GTPase Era, mitochondrial (461 aa).

A mitochondrion-targeting transit peptide spans 1 to 35; sequence MAAPWLQRWRGAYAGPSGPLRLVRLHGVQRSSWRA. The disordered stretch occupies residues 39-73; sequence AAGAFGAGPHPGPPQRAANPGPGPHPPPVATSREK. In terms of domain architecture, Era-type G spans 89-354; sequence KVLRISIIGA…QYLLMQAKPG (266 aa). Positions 97–104 are G1; it reads GAPNSGKS. GTP is bound at residue 97-104; that stretch reads GAPNSGKS. The segment at 123–127 is G2; it reads HTTRC. The G3 stretch occupies residues 144 to 147; it reads DTPG. GTP is bound by residues 144–148 and 213–216; these read DTPGL and NKVD. The tract at residues 213–216 is G4; sequence NKVD. The interval 260–319 is disordered; that stretch reads KVTQTPPPENRARESPCQLETDKAQEGSSLDNSSDVKASESSLDTEAREQKPYKYGDQKN. The segment covering 269–284 has biased composition (basic and acidic residues); the sequence is NRARESPCQLETDKAQ. Positions 285-303 are enriched in polar residues; it reads EGSSLDNSSDVKASESSLD. The span at 304–319 shows a compositional bias: basic and acidic residues; that stretch reads TEAREQKPYKYGDQKN. Residues 332 to 334 form a G5 region; sequence LAA. The KH type-2 domain occupies 380–461; the sequence is ILEYLPLEVP…RLKLKVEVKS (82 aa).

The protein belongs to the TRAFAC class TrmE-Era-EngA-EngB-Septin-like GTPase superfamily. Era GTPase family.

It is found in the mitochondrion matrix. It localises to the mitochondrion inner membrane. Its function is as follows. Probable GTPase that plays a role in the mitochondrial ribosomal small subunit assembly. Specifically binds the 12S mitochondrial rRNA (12S mt-rRNA) to a 33 nucleotide section delineating the 3' terminal stem-loop region. May act as a chaperone that protects the 12S mt-rRNA on the 28S mitoribosomal subunit during ribosomal small subunit assembly. The sequence is that of GTPase Era, mitochondrial (ERAL1) from Gallus gallus (Chicken).